Consider the following 142-residue polypeptide: Rhinocerosin (142 aa).

The N-terminal stretch at Met-1–Ala-16 is a signal peptide. Residues Tyr-17–Arg-70 constitute a propeptide that is removed on maturation. A disordered region spans residues Leu-72–Lys-96. Residues Gln-85–Lys-96 are compositionally biased toward polar residues.

The protein belongs to the coleoptericin family. In terms of tissue distribution, strongly expressed in the fat body and the Malpighian tubules, and weakly expressed in hemocytes and midgut.

The protein resides in the secreted. Its function is as follows. Has strong antibacterial activity against E.coli, Streptococcus pyogenes, Staphylococcus aureus but not against Pseudomonas aeruginosa. The sequence is that of Rhinocerosin from Oryctes rhinoceros (Coconut rhinoceros beetle).